The chain runs to 190 residues: Large ribosomal subunit protein uL10 (190 aa).

Belongs to the universal ribosomal protein uL10 family. In terms of assembly, part of the ribosomal stalk of the 50S ribosomal subunit. The N-terminus interacts with L11 and the large rRNA to form the base of the stalk. The C-terminus forms an elongated spine to which L12 dimers bind in a sequential fashion forming a multimeric L10(L12)X complex.

Functionally, forms part of the ribosomal stalk, playing a central role in the interaction of the ribosome with GTP-bound translation factors. The chain is Large ribosomal subunit protein uL10 from Trichodesmium erythraeum (strain IMS101).